Here is a 759-residue protein sequence, read N- to C-terminus: LPS-assembly protein LptD (759 aa).

An N-terminal signal peptide occupies residues 1–45; the sequence is MKPLKLELNPRDFNHYQAAFLPYRMKIKQPLHVLCFSVCSLSAVA.

It belongs to the LptD family. In terms of assembly, component of the lipopolysaccharide transport and assembly complex. Interacts with LptE and LptA.

The protein resides in the cell outer membrane. Its function is as follows. Together with LptE, is involved in the assembly of lipopolysaccharide (LPS) at the surface of the outer membrane. In Pseudoalteromonas atlantica (strain T6c / ATCC BAA-1087), this protein is LPS-assembly protein LptD.